Consider the following 221-residue polypeptide: Peptide methionine sulfoxide reductase MsrA (221 aa).

Cys54 is an active-site residue.

Belongs to the MsrA Met sulfoxide reductase family.

It carries out the reaction L-methionyl-[protein] + [thioredoxin]-disulfide + H2O = L-methionyl-(S)-S-oxide-[protein] + [thioredoxin]-dithiol. The enzyme catalyses [thioredoxin]-disulfide + L-methionine + H2O = L-methionine (S)-S-oxide + [thioredoxin]-dithiol. Its function is as follows. Has an important function as a repair enzyme for proteins that have been inactivated by oxidation. Catalyzes the reversible oxidation-reduction of methionine sulfoxide in proteins to methionine. The polypeptide is Peptide methionine sulfoxide reductase MsrA (Methylobacterium sp. (strain 4-46)).